A 155-amino-acid chain; its full sequence is Small ribosomal subunit protein uS7cz/uS7cy (155 aa).

The protein belongs to the universal ribosomal protein uS7 family. As to quaternary structure, part of the 30S ribosomal subunit.

It localises to the plastid. The protein localises to the chloroplast. Its function is as follows. One of the primary rRNA binding proteins, it binds directly to 16S rRNA where it nucleates assembly of the head domain of the 30S subunit. The protein is Small ribosomal subunit protein uS7cz/uS7cy (rps7-A) of Nandina domestica (Heavenly bamboo).